Here is a 43-residue protein sequence, read N- to C-terminus: Lanthionine-containing peptide SapB (43 aa).

The signal sequence occupies residues 1–21 (MALLDLQAMDTPAEDSFGELA). 2 consecutive cross-links (lanthionine (Ser-Cys)) follow at residues 24-31 (SQVSLLVC) and 34-41 (SSLSVVLC). Residues S27 and S37 each carry the 2,3-didehydroalanine (Ser) modification.

This sequence belongs to the lanthionine-containing morphogen protein family. Post-translationally, maturation involves the enzymatic conversion of Ser into dehydrated AA and the formation of thioether bonds with cysteine. This is followed by membrane translocation and cleavage of the modified precursor.

Its function is as follows. Lanthionine-containing peptide devoid of antibiotic properties, involved in the formation of aerial mycelium. Suggested to self-assemble at air-water interfaces, thus providing a film of surfactant through which nascent aerial hyphae can emerge. The aerial hyphae differentiate further into spores. In Streptomyces griseus subsp. griseus (strain JCM 4626 / CBS 651.72 / NBRC 13350 / KCC S-0626 / ISP 5235), this protein is Lanthionine-containing peptide SapB (ramS).